A 267-amino-acid polypeptide reads, in one-letter code: Kallikrein-14 (267 aa).

Positions 1–34 (MSLRVLGSGTWPSAPKMFLLLTALQVLAIAMTQS) are cleaved as a signal peptide. Residues 35-40 (QEDENK) constitute a propeptide, activation peptide. The region spanning 41–265 (IIGGHTCTRS…YRSWIEETMR (225 aa)) is the Peptidase S1 domain. 5 disulfide bridges follow: Cys47–Cys180, Cys68–Cys84, Cys159–Cys226, Cys191–Cys205, and Cys216–Cys241. Catalysis depends on charge relay system residues His83 and Asp127. Residue Ser220 is the Charge relay system of the active site.

This sequence belongs to the peptidase S1 family. Kallikrein subfamily. Proteolytic cleavage of the activation peptide produces the active enzyme. As to expression, highly expressed in CNS, bone marrow and fetal liver. Also expressed in breast, thyroid, kidney, colon, pancreas, spleen, prostate, uterus, small intestine, placenta and skeletal muscle. Among 40 tissues tested, the highest expression is detected in skin followed by breast and prostate (at protein level). Expressed in stratum corneum by sweat ducts and sweat glands and detected in sweat (at protein level).

Its subcellular location is the secreted. The protein localises to the extracellular space. Its activity is regulated as follows. Inhibited by SERPINA1, SERPINC1, SERPINE1, SERPINF2, aprotinin, soybean, trypsin inhibitor and leupeptin. Inhibited by serine protease inhibitor SPINK5. Has an autoproteolytic activity which may have a regulatory effect. Activated by citrate and inhibited by zinc and to a lower extent by manganese. Functionally, serine-type endopeptidase with a dual trypsin-like and chymotrypsin-like substrate specificity. May activate/inactivate the proteinase-activated receptors F2R, F2RL1 and F2RL3 and other kallikreins including KLK1, KLK3, KLK5 and KLK11. May function in seminal clot liquefaction through direct cleavage of the semenogelin SEMG1 and SEMG2 and activation of KLK3. May function through desmoglein DSG1 cleavage in epidermal desquamation a process by which the most superficial corneocytes are shed from the skin surface. May be involved in several aspects of tumor progression including growth, invasion and angiogenesis. This chain is Kallikrein-14 (KLK14), found in Homo sapiens (Human).